The chain runs to 269 residues: Phosphonates import ATP-binding protein PhnC 2 (269 aa).

The 245-residue stretch at leucine 2–aspartate 246 folds into the ABC transporter domain. Residue glycine 35–serine 42 participates in ATP binding. The segment at aspartate 246–histidine 269 is disordered.

This sequence belongs to the ABC transporter superfamily. Phosphonates importer (TC 3.A.1.9.1) family. As to quaternary structure, the complex is composed of two ATP-binding proteins (PhnC), two transmembrane proteins (PhnE) and a solute-binding protein (PhnD).

Its subcellular location is the cell inner membrane. It catalyses the reaction phosphonate(out) + ATP + H2O = phosphonate(in) + ADP + phosphate + H(+). In terms of biological role, part of the ABC transporter complex PhnCDE involved in phosphonates import. Responsible for energy coupling to the transport system. This is Phosphonates import ATP-binding protein PhnC 2 from Synechococcus sp. (strain JA-2-3B'a(2-13)) (Cyanobacteria bacterium Yellowstone B-Prime).